The primary structure comprises 988 residues: MEPQVTLNVTFKNETQSFLVSDPENTTWADVEAMVKVSFDLNTIQIKYLDEENEEISINSQGEYEEALKMANIKQGNQLQMQVHEGYHVVDEALPKNVVENQAAARTGKKPLAHYSSLVRVLGSDMKTTEEPAPEQCSSAPCDTDQPQDKPPDWFTSYLEMFREQVVKETVEKLEQRLQEKLVLQKPLLSSSPTEVSMPISEETLFLPENQFSWHIACSHCQKRIVGVRYQCSLCPSYNICEDCEAGPYTHDTNHVLLKLRRPVVISSEPFFYSKYSAPRLPAALEQVRLQKQVDKNFVKAEKQRLRAEKKQRKAEVKELKKQLKLHRKIHLWNSIHGLQSPKSPLGRPESLLQSNTLMLPLQPCAPVMPTLSAAFVDENLPDGTHLQPGTKFIKHWRMKNTGNVKWNTDTKLKFMWGNLTLASTEKKDVLVPCLKAGHVGVVSVEFIAPTLEGTYTSHWRLSHKGQQFGPRVWCSIIVDPFPSSESPDNVEGDRISSSKADDFSCEQEEAFLLAEEEIPLGEVTKQTEGTGASASQKTRRAASERELYIPSVDLLTAQDLLSFELLDINIVQELERVPHNTPVDMTPCMSPLPHDSPLIEKPGLGQIQEESEGAGFKAPPDSTVSAKRKAETPASVEETEEDLSGTQFVCETVIRSLTLDAAPDHNPPCRQRSPQRELQLYSTEGQQPLVLPGFCRKDSSLKFALPEEGPRGDEREEIVHIVEEEVVEEEEEVQDEEVQSQSSASSEDYIIILPECFDTSRPLGDSMYSSALSQPGLERGAEGEPGIESGLEPTEARERLPERESQPQEQSISDILTTSQPLDTVPLVPEVAGLPAALSRSAPCGQCESSGVDSPGVDSPATMHEVPPAPDDIRGEPRGSTGLANSRQRSCDHSRHHNGSSIAGGLVKGALSVAASAYKALFSGPPVTAQPIVSEDQTTALMAHLFEMGFCDRQLNLRLLRKHNYNILQVVTELLQVNNNDWYSHRY.

Residues 4-86 (QVTLNVTFKN…NQLQMQVHEG (83 aa)) enclose the PB1 domain. Phosphoserine is present on serine 117. Residues 126-150 (MKTTEEPAPEQCSSAPCDTDQPQDK) are disordered. The ZZ-type zinc-finger motif lies at 213–265 (SWHIACSHCQKRIVGVRYQCSLCPSYNICEDCEAGPYTHDTNHVLLKLRRPVV). Residues cysteine 218, cysteine 221, cysteine 232, cysteine 235, cysteine 241, cysteine 244, histidine 251, and histidine 255 each coordinate Zn(2+). ATG8 family proteins-binding stretches follow at residues 543–637 (ASER…PASV) and 745–756 (ASSEDYIIILPE). A Phosphothreonine modification is found at threonine 587. Phosphoserine occurs at positions 591, 597, and 626. The interval 611-644 (ESEGAGFKAPPDSTVSAKRKAETPASVEETEEDL) is disordered. 2 disordered regions span residues 768–822 (MYSS…TSQP) and 841–900 (RSAP…HHNG). Residues 795 to 807 (TEARERLPERESQ) show a composition bias toward basic and acidic residues. The span at 808–822 (PQEQSISDILTTSQP) shows a compositional bias: polar residues. Residue serine 860 is modified to Phosphoserine. In terms of domain architecture, UBA spans 935 to 979 (SEDQTTALMAHLFEMGFCDRQLNLRLLRKHNYNILQVVTELLQVN).

In terms of assembly, homooligomer and heterooligomer. Interacts with TRIM55. Interacts with titin/TTN. Interacts with RNF29, USP8, MAP1LC3A, MAP1LC3B, MAP1LC3C, GABARAP, GABARAPL1 and GABARAPL2. Binds to ubiquitin and ubiquitinated proteins. Interacts with SQSTM1. Interacts with TAX1BP1. Interacts with IRF3; this interaction mediates autophagic degradation of IRF3. Interacts with IL12A and IL12B. In terms of processing, phosphorylated by GSK3A; this phosphorylation inhibits NBR1 involvement in the formation of ubiquitinated protein aggregates. In terms of tissue distribution, expressed in brain.

Its subcellular location is the cytoplasm. The protein resides in the cytoplasmic vesicle. It is found in the autophagosome. The protein localises to the lysosome. It localises to the myofibril. Its subcellular location is the sarcomere. The protein resides in the m line. Functionally, ubiquitin-binding autophagy adapter that participates in different processes including host defense or intracellular homeostasis. Possesses a double function during the selective autophagy by acting as a shuttle bringing ubiquitinated proteins to autophagosomes and also by participating in the formation of protein aggregates. Plays a role in the regulation of the innate immune response by modulating type I interferon production and targeting ubiquitinated IRF3 for autophagic degradation. In response to oxidative stress, promotes an increase in SQSTM1 levels, phosphorylation, and body formation by preventing its autophagic degradation. In turn, activates the KEAP1-NRF2/NFE2L2 antioxidant pathway. Also plays non-autophagy role by mediating the shuttle of IL-12 to late endosome for subsequent secretion. This is Next to BRCA1 gene 1 protein (Nbr1) from Mus musculus (Mouse).